The primary structure comprises 288 residues: 11-beta-hydroxysteroid dehydrogenase 1 (288 aa).

Over 1-4 (MKKY) the chain is Cytoplasmic. The chain crosses the membrane as a helical; Signal-anchor for type II membrane protein span at residues 5-20 (LLPVLVLCLGYYYSTN). Over 21–288 (EEFRPEMLQG…SYNRDLFVSN (268 aa)) the chain is Lumenal. NADP(+) is bound by residues 37–63 (GASKGIGREMAYHLSKMGAHVVLTARS), 88–89 (TM), and 115–117 (NHI). N-linked (GlcNAc...) asparagine glycosylation occurs at Asn158. Residue Ser166 participates in substrate binding. The Proton acceptor role is filled by Tyr179. 179–183 (YSASK) is an NADP(+) binding site. A glycan (N-linked (GlcNAc...) asparagine) is linked at Asn203. NADP(+)-binding positions include 212-218 (GFIDTET) and 214-218 (IDTET).

This sequence belongs to the short-chain dehydrogenases/reductases (SDR) family. In terms of assembly, homodimer. Glycosylated. Liver, kidney, lung and testis. Brain. Expressed in liver (at protein level).

The protein localises to the endoplasmic reticulum membrane. It carries out the reaction an 11beta-hydroxysteroid + NADP(+) = an 11-oxosteroid + NADPH + H(+). It catalyses the reaction corticosterone + NADP(+) = 11-dehydrocorticosterone + NADPH + H(+). The enzyme catalyses a 7beta-hydroxysteroid + NADP(+) = a 7-oxosteroid + NADPH + H(+). The catalysed reaction is 7-oxocholesterol + NADPH + H(+) = 7beta-hydroxycholesterol + NADP(+). It carries out the reaction chenodeoxycholate + NADP(+) = 7-oxolithocholate + NADPH + H(+). It catalyses the reaction 7-oxolithocholate + NADPH + H(+) = ursodeoxycholate + NADP(+). The enzyme catalyses glycochenodeoxycholate + NADP(+) = 7-oxoglycolithocholate + NADPH + H(+). The catalysed reaction is taurochenodeoxycholate + NADP(+) = 7-oxotaurolithocholate + NADPH + H(+). It carries out the reaction tauroursodeoxycholate + NADP(+) = 7-oxotaurolithocholate + NADPH + H(+). It catalyses the reaction glycoursodeoxycholate + NADP(+) = 7-oxoglycolithocholate + NADPH + H(+). The enzyme catalyses 7-oxopregnenolone + NADPH + H(+) = 7beta-hydroxypregnenolone + NADP(+). The catalysed reaction is 3beta,7alpha-dihydroxyandrost-5-en-17-one + NADP(+) = 3beta-hydroxy-5-androstene-7,17-dione + NADPH + H(+). It carries out the reaction 3beta-hydroxy-5-androstene-7,17-dione + NADPH + H(+) = 3beta,7beta-dihydroxyandrost-5-en-17-one + NADP(+). It catalyses the reaction 3beta-hydroxy-5alpha-androstane-7,17-dione + NADPH + H(+) = 3beta,7beta-dihydroxy-5alpha-androstan-17-one + NADP(+). In terms of biological role, controls the reversible conversion of biologically active glucocorticoids such as 11-dehydrocorticosterone to corticosterone using NADP(H). Participates in the corticosteroid receptor-mediated anti-inflammatory response, as well as metabolic and homeostatic processes. Bidirectional in vitro, predominantly functions as a reductase in vivo, thereby increasing the concentration of active glucocorticoids. It has broad substrate specificity, besides glucocorticoids, it accepts other steroid and sterol substrates. Interconverts 7-oxo- and 7-hydroxy-neurosteroids such as 7-oxopregnenolone and 7beta-hydroxypregnenolone, 7-oxodehydroepiandrosterone (3beta-hydroxy-5-androstene-7,17-dione) and 7beta-hydroxydehydroepiandrosterone (3beta,7beta-dihydroxyandrost-5-en-17-one), among others. Catalyzes the stereo-specific conversion of the major dietary oxysterol, 7-ketocholesterol (7-oxocholesterol), into the more polar 7-beta-hydroxycholesterol metabolite. 7-oxocholesterol is one of the most important oxysterols, it participates in several events such as induction of apoptosis, accumulation in atherosclerotic lesions, lipid peroxidation, and induction of foam cell formation. Mediates the 7-oxo reduction of 7-oxolithocholate mainly to chenodeoxycholate, and to a lesser extent to ursodeoxycholate, both in its free form and when conjugated to glycine or taurine, providing a link between glucocorticoid activation and bile acid metabolism. Catalyzes the synthesis of 7-beta-25-dihydroxycholesterol from 7-oxo-25-hydroxycholesterol in vitro, which acts as a ligand for the G-protein-coupled receptor (GPCR) Epstein-Barr virus-induced gene 2 (EBI2) and may thereby regulate immune cell migration. The sequence is that of 11-beta-hydroxysteroid dehydrogenase 1 from Rattus norvegicus (Rat).